The following is a 64-amino-acid chain: Small ribosomal subunit protein bS21 (64 aa).

Residues 37-64 (EKPSVKRKRKEKEAQRRLRKKMRMMKKA) form a disordered region. The segment covering 53-64 (RLRKKMRMMKKA) has biased composition (basic residues).

Belongs to the bacterial ribosomal protein bS21 family.

This Syntrophotalea carbinolica (strain DSM 2380 / NBRC 103641 / GraBd1) (Pelobacter carbinolicus) protein is Small ribosomal subunit protein bS21.